A 1203-amino-acid chain; its full sequence is Cation-transporting ATPase catp-5 (1203 aa).

Residues 1–68 (MNTSEREPLL…YAYKETIGRQ (68 aa)) lie on the Cytoplasmic side of the membrane. The tract at residues 21–42 (TTDNPSTKIMKREKDNPKAKTT) is disordered. Residues 69–89 (ILFWLLTIVTLGFYQLLAYWV) form a helical membrane-spanning segment. The Extracellular portion of the chain corresponds to 90–209 (KSLFVKVRFQ…RKIYNMNALA (120 aa)). The chain crosses the membrane as a helical span at residues 210 to 230 (LALTPILVILFKEVLGPFYLF). The Cytoplasmic portion of the chain corresponds to 231-242 (QCFSVALWYSDN). Residues 243 to 263 (YAYYASVIVIITVGSAAVAVY) traverse the membrane as a helical segment. The Extracellular segment spans residues 264-297 (QMRAQEKRIRNMVGDTISVIVRRDGHDITIDASE). The chain crosses the membrane as a helical span at residues 298–318 (IVPMDILILPSNTFILPCDCL). At 319-414 (LMNGTVIVNE…KPQEKEALKD (96 aa)) the chain is on the cytoplasmic side. A helical membrane pass occupies residues 415-435 (VMVFILVLGFIALIGFIYTVI). Over 436–451 (EMVSRGESLKHIIIRS) the chain is Extracellular. A helical membrane pass occupies residues 452 to 472 (LDIITIVVPPALPAAMSVGII). Residues 473–935 (NANSRLKKKK…KEGRCALVTS (463 aa)) are Cytoplasmic-facing. The active-site 4-aspartylphosphate intermediate is Asp503. Residues 595-617 (ETQDFDTVQPTVLRPPPEQATYH) form a disordered region. Mg(2+) contacts are provided by Asp883 and Asp887. The chain crosses the membrane as a helical span at residues 936–956 (YAVSKYMAAYSLNEFLSVMLL). Over 957-962 (YNDGTN) the chain is Extracellular. A helical membrane pass occupies residues 963 to 983 (ISDGQFLYIDLVLITLVALFL). Residues 984 to 1007 (GNTEASRKLSGIPPPRRLATSAFY) are Cytoplasmic-facing. Residues 1008-1028 (FSVFGQMFFNIITQTTGYLLV) traverse the membrane as a helical segment. Over 1029 to 1046 (RGQSWYVPNPEELDNTTT) the chain is Extracellular. A helical transmembrane segment spans residues 1047–1067 (MIGTTVFFTSCCMYLGYAFVY). At 1068-1085 (SKGHPYRRSVFTNWLLCG) the chain is on the cytoplasmic side. A helical membrane pass occupies residues 1086-1106 (IIFVIGAINMVMIFTNMGFLM). Topologically, residues 1107-1120 (NLMGFVYVPSTSMR) are extracellular. Residues 1121–1141 (FILLAISLAGVFLSLLYEHFF) form a helical membrane-spanning segment. Topologically, residues 1142 to 1203 (VEKVVAIHFE…DRKETIESKC (62 aa)) are cytoplasmic.

Belongs to the cation transport ATPase (P-type) (TC 3.A.3) family. Type V subfamily. In terms of tissue distribution, expressed in the 20 intestinal cells and in the excretory cell.

It is found in the apical cell membrane. The catalysed reaction is ATP + H2O = ADP + phosphate + H(+). Functionally, involved in the uptake and/or transport of polyamines, probably through ATP hydrolysis. This contributes to the maintenance of intracellular polyamine levels. Polyamines are essential for cell proliferation and are implicated in cellular processes, ranging from DNA replication to apoptosis. This is Cation-transporting ATPase catp-5 from Caenorhabditis elegans.